We begin with the raw amino-acid sequence, 1576 residues long: Protein Shroom (1576 aa).

Disordered stretches follow at residues 1 to 31, 46 to 100, 112 to 142, 187 to 244, 267 to 434, 589 to 609, and 621 to 660; these read MKMRNHKENGNGSEMGESTKSLAKMEPENNN, SNGA…TQAG, YDQTAFHHQKQPSYAQSEGYHSYVSSSDSTS, RQSH…SSTE, ISES…ISVT, VERQQQQQKEEQQLLRPHSQS, and PNNLSPIMVGLPTGSNSASTRDCSSPTPPPPPRRSGSLLP. Residues 10-21 are compositionally biased toward polar residues; that stretch reads GNGSEMGESTKS. Low complexity-rich tracts occupy residues 46-69, 76-91, and 128-142; these read SNGANSRSSNSNASFSSASVAGSV, HNSSSSQLGQQHGSSL, and SEGYHSYVSSSDSTS. The segment covering 189 to 211 has biased composition (basic residues); it reads SHSHSHSHAHSHSNSHGHSHGHA. 2 stretches are compositionally biased toward low complexity: residues 212 to 244 and 267 to 283; these read HSASSSSSSNNNSNGSATNNNNNNSSESTSSTE and ISESVSSSQRIVHSSRV. The segment covering 305-317 has biased composition (polar residues); that stretch reads DSSPTASNSSQMM. Positions 376–388 are enriched in low complexity; sequence QSTLSTQSSLLEL. Positions 399-415 are enriched in polar residues; the sequence is MGQSHSMGDLQQKNPHQ. A Phosphoserine modification is found at Ser-404. The interval 445–920 is F-actin binding region required for planar polarity and cortical localization; the sequence is APQPPAGKPS…LESNQQKRSN (476 aa). Over residues 633-643 the composition is skewed to polar residues; it reads TGSNSASTRDC. Phosphoserine occurs at positions 667 and 668. Disordered stretches follow at residues 699–728, 743–823, 849–876, 910–939, 1036–1055, 1091–1116, and 1210–1244; these read ISFNDCGMPPPPPPPRGRLAVPTRRTSSAT, AALA…NCFA, VPKKPTSLQHKHLANGGGGSRKRPHHAT, NLESNQQKRSNSKASYLPRQSLEKLNNTDP, GYGKSSKPVTPQQYTRSQSY, PTATPTPTPTPTPTPPRLSPASSHSD, and SFANEPLMTPPLPPSPPPPLEPEEEEEQEENDVHD. Residues 748–759 are compositionally biased toward basic residues; that stretch reads QQHHPQQHRHAQ. The span at 798-816 shows a compositional bias: pro residues; it reads PLPPPPPPEVLQPRPPPSP. Composition is skewed to polar residues over residues 910-923 and 1042-1055; these read NLESNQQKRSNSKA and KPVTPQQYTRSQSY. Pro residues-rich tracts occupy residues 1094 to 1108 and 1217 to 1229; these read TPTPTPTPTPTPPRL and MTPPLPPSPPPPL. A compositionally biased stretch (acidic residues) spans 1230-1239; the sequence is EPEEEEEQEE. Residues 1232–1296 are a coiled coil; that stretch reads EEEEEQEEND…LEAAREEHQT (65 aa). In terms of domain architecture, ASD2 spans 1305–1572; the sequence is RQPIELDYEQ…QLSSLSDALV (268 aa).

It belongs to the shroom family. As to quaternary structure, monomer or homodimer. Interacts with Rok. In terms of assembly, binds (via N-terminus) to F-actin.

Its subcellular location is the cell junction. The protein localises to the adherens junction. It localises to the cytoplasm. It is found in the cytoskeleton. The protein resides in the apical cell membrane. Functionally, binds to Rho-kinase Rok and targets it to the apical cell cortex where it mediates apical constriction. During embryogenic axis elongation, required for the localization to adherens junctions and the establishment of planar polarization of both Rho-kinase Rok and myosin regulatory light chain sqh. May be involved in the assembly of microtubule arrays during cell elongation. In Drosophila melanogaster (Fruit fly), this protein is Protein Shroom.